A 114-amino-acid polypeptide reads, in one-letter code: Large ribosomal subunit protein bL19 (114 aa).

Belongs to the bacterial ribosomal protein bL19 family.

Its function is as follows. This protein is located at the 30S-50S ribosomal subunit interface and may play a role in the structure and function of the aminoacyl-tRNA binding site. This Desulfatibacillum aliphaticivorans protein is Large ribosomal subunit protein bL19.